A 384-amino-acid polypeptide reads, in one-letter code: MFTGGGTIALIERLATSWLTAIRLILSWHPIHAPNRNQEPLDSLCREGREYIVMISGTVHPRHATWPFWQVMRKCLDWCCAFHPPDDHSCEFGAPRIGIRLEGENHFFAPILGLYSVVMTWSPISCYREFPIRQNSKEPDPQPSTSSEPEPQPSTSSHRNIPVARVRPLVAQQKVPKTRPLDTEIHRPGPIAIQNPTDTDEPELRLNPRPRPGPSGQNTRPRTPTLDLDTVVVRDHPVTHRRPRSPSPPEEDYTNQDENLSYTPQLIHSSPDSEVAEEIYAQPDPWGTQELLLANRERTPDDQTDITDDSADWSEGETRRPSHSEVGERRLSRENNSEDPNRSRSRSRSRERRRRRPRVRPGRRSTATTIRDLVVLGMSSSDDE.

Disordered stretches follow at residues 133–257 and 297–368; these read RQNS…TNQD and ERTP…STAT. Low complexity predominate over residues 143–157; the sequence is PSTSSEPEPQPSTSS. Positions 302-315 are enriched in acidic residues; that stretch reads DQTDITDDSADWSE. Residues 316 to 342 are compositionally biased toward basic and acidic residues; it reads GETRRPSHSEVGERRLSRENNSEDPNR. Residues 343–363 are compositionally biased toward basic residues; that stretch reads SRSRSRSRERRRRRPRVRPGR.

This is an uncharacterized protein from Gallid herpesvirus 2 (strain Chicken/Md5/ATCC VR-987) (GaHV-2).